Consider the following 146-residue polypeptide: uncharacterized protein (146 aa).

The span at A119–S128 shows a compositional bias: basic and acidic residues. The segment at A119–K146 is disordered.

This is an uncharacterized protein from Schizosaccharomyces pombe (strain 972 / ATCC 24843) (Fission yeast).